The chain runs to 861 residues: Leucine--tRNA ligase (861 aa).

Residues 42 to 52 (PYPSGRLHMGH) carry the 'HIGH' region motif. A 'KMSKS' region motif is present at residues 619–623 (KMSKS). Residue K622 coordinates ATP.

It belongs to the class-I aminoacyl-tRNA synthetase family.

It is found in the cytoplasm. The enzyme catalyses tRNA(Leu) + L-leucine + ATP = L-leucyl-tRNA(Leu) + AMP + diphosphate. The polypeptide is Leucine--tRNA ligase (Haemophilus influenzae (strain ATCC 51907 / DSM 11121 / KW20 / Rd)).